Consider the following 900-residue polypeptide: Alanine--tRNA ligase (900 aa).

Zn(2+) is bound by residues histidine 567, histidine 571, cysteine 671, and histidine 675.

It belongs to the class-II aminoacyl-tRNA synthetase family. Zn(2+) is required as a cofactor.

It localises to the cytoplasm. It catalyses the reaction tRNA(Ala) + L-alanine + ATP = L-alanyl-tRNA(Ala) + AMP + diphosphate. Catalyzes the attachment of alanine to tRNA(Ala) in a two-step reaction: alanine is first activated by ATP to form Ala-AMP and then transferred to the acceptor end of tRNA(Ala). Also edits incorrectly charged Ser-tRNA(Ala) and Gly-tRNA(Ala) via its editing domain. This chain is Alanine--tRNA ligase, found in Mycoplasma pneumoniae (strain ATCC 29342 / M129 / Subtype 1) (Mycoplasmoides pneumoniae).